Consider the following 211-residue polypeptide: Protein-L-isoaspartate O-methyltransferase (211 aa).

Ser62 is an active-site residue.

Belongs to the methyltransferase superfamily. L-isoaspartyl/D-aspartyl protein methyltransferase family.

The protein localises to the cytoplasm. It carries out the reaction [protein]-L-isoaspartate + S-adenosyl-L-methionine = [protein]-L-isoaspartate alpha-methyl ester + S-adenosyl-L-homocysteine. In terms of biological role, catalyzes the methyl esterification of L-isoaspartyl residues in peptides and proteins that result from spontaneous decomposition of normal L-aspartyl and L-asparaginyl residues. It plays a role in the repair and/or degradation of damaged proteins. This chain is Protein-L-isoaspartate O-methyltransferase, found in Shewanella baltica (strain OS195).